The sequence spans 377 residues: Tryptophan--tRNA ligase, mitochondrial (377 aa).

ATP is bound by residues Gln-21 and 28-31; that span reads HLGN. The 'HIGH' region signature appears at 22–31; sequence PTSSALHLGN. Asp-181 serves as a coordination point for L-tryptophan. ATP contacts are provided by residues 193-195, 242-246, and Lys-245; these read GED and KMSKS. The short motif at 242-246 is the 'KMSKS' region element; it reads KMSKS.

This sequence belongs to the class-I aminoacyl-tRNA synthetase family.

The protein localises to the mitochondrion matrix. It carries out the reaction tRNA(Trp) + L-tryptophan + ATP = L-tryptophyl-tRNA(Trp) + AMP + diphosphate + H(+). The chain is Tryptophan--tRNA ligase, mitochondrial (wars2) from Dictyostelium discoideum (Social amoeba).